The chain runs to 718 residues: Polyribonucleotide nucleotidyltransferase (718 aa).

Residues Asp-487 and Asp-493 each contribute to the Mg(2+) site. The region spanning 554–613 (PRIETFKIPTDKIREVIGTGGKVIREIVEKTGAKVNIEDDGTVKVASSDGESIKAAIKWI) is the KH domain. In terms of domain architecture, S1 motif spans 623–691 (GEIYEGTVVK…DRGKTRLSMR (69 aa)). The segment at 694–718 (DQETGEDLEAKQKAEGEAPAQATGE) is disordered.

It belongs to the polyribonucleotide nucleotidyltransferase family. Mg(2+) is required as a cofactor.

It is found in the cytoplasm. The enzyme catalyses RNA(n+1) + phosphate = RNA(n) + a ribonucleoside 5'-diphosphate. Involved in mRNA degradation. Catalyzes the phosphorolysis of single-stranded polyribonucleotides processively in the 3'- to 5'-direction. This is Polyribonucleotide nucleotidyltransferase from Rhodopseudomonas palustris (strain HaA2).